The chain runs to 112 residues: MIVGRHIIAELYGVKEELIAKEEVVRSIVEEVVDKAELTKVGSVYKQFNPHGVTGIVLIAESHVSIHTWPEYGLVNLDIFTCGDTSKVEKAFKLFLEKFKPESYRHYVLDRG.

The active-site Schiff-base intermediate with substrate; via pyruvic acid is Ser62. At Ser62 the chain carries Pyruvic acid (Ser); by autocatalysis. His67 functions as the Proton acceptor; for processing activity in the catalytic mechanism. Cys82 serves as the catalytic Proton donor; for catalytic activity.

It belongs to the prokaryotic AdoMetDC family. Type 1 subfamily. Heterotetramer of two alpha and two beta chains arranged as a dimer of alpha/beta heterodimers. Pyruvate serves as cofactor. Is synthesized initially as an inactive proenzyme. Formation of the active enzyme involves a self-maturation process in which the active site pyruvoyl group is generated from an internal serine residue via an autocatalytic post-translational modification. Two non-identical subunits are generated from the proenzyme in this reaction, and the pyruvate is formed at the N-terminus of the alpha chain, which is derived from the carboxyl end of the proenzyme. The post-translation cleavage follows an unusual pathway, termed non-hydrolytic serinolysis, in which the side chain hydroxyl group of the serine supplies its oxygen atom to form the C-terminus of the beta chain, while the remainder of the serine residue undergoes an oxidative deamination to produce ammonia and the pyruvoyl group blocking the N-terminus of the alpha chain.

The catalysed reaction is S-adenosyl-L-methionine + H(+) = S-adenosyl 3-(methylsulfanyl)propylamine + CO2. Its pathway is amine and polyamine biosynthesis; S-adenosylmethioninamine biosynthesis; S-adenosylmethioninamine from S-adenosyl-L-methionine: step 1/1. Functionally, catalyzes the decarboxylation of S-adenosylmethionine to S-adenosylmethioninamine (dcAdoMet), the propylamine donor required for the synthesis of the polyamines spermine and spermidine from the diamine putrescine. In Archaeoglobus fulgidus (strain ATCC 49558 / DSM 4304 / JCM 9628 / NBRC 100126 / VC-16), this protein is S-adenosylmethionine decarboxylase proenzyme.